A 252-amino-acid polypeptide reads, in one-letter code: 2-succinyl-6-hydroxy-2,4-cyclohexadiene-1-carboxylate synthase (252 aa).

The protein belongs to the AB hydrolase superfamily. MenH family. Monomer.

The enzyme catalyses 5-enolpyruvoyl-6-hydroxy-2-succinyl-cyclohex-3-ene-1-carboxylate = (1R,6R)-6-hydroxy-2-succinyl-cyclohexa-2,4-diene-1-carboxylate + pyruvate. It participates in quinol/quinone metabolism; 1,4-dihydroxy-2-naphthoate biosynthesis; 1,4-dihydroxy-2-naphthoate from chorismate: step 3/7. It functions in the pathway quinol/quinone metabolism; menaquinone biosynthesis. In terms of biological role, catalyzes a proton abstraction reaction that results in 2,5-elimination of pyruvate from 2-succinyl-5-enolpyruvyl-6-hydroxy-3-cyclohexene-1-carboxylate (SEPHCHC) and the formation of 2-succinyl-6-hydroxy-2,4-cyclohexadiene-1-carboxylate (SHCHC). This chain is 2-succinyl-6-hydroxy-2,4-cyclohexadiene-1-carboxylate synthase, found in Shigella dysenteriae serotype 1 (strain Sd197).